A 251-amino-acid polypeptide reads, in one-letter code: VYITNAGDITLSPKGVEMAHVNNVRLYVHGERWTASQPGDWGSQWQVEAPIFVDHGYVSQDCYYPIIKGRSVITNQGFVTAVDLGIRRVNNNWGQAIIRVGSAEASPAAGHPNAVFEFHYDGTFYSPGNGNFSDVYIRSDGRLKINKKELENGALEKVCRLKVYTYDKVKSIKDRSVIKREVGIIAQDLEKELPEAVSKVEVDGSDVLTISNSAVNALLIKAIQEMSEEIKELKTPFFTKIARKISKYFKF.

An interaction with the receptor-recognizing protein gp38 region spans residues Asp-134–Ile-137. Residues Ser-139 to Phe-237 form the Peptidase S74 domain.

This sequence belongs to the S16-like long tail fiber protein Gp37 family. Homotrimer. Interacts with the receptor-recognizing protein Gp38. Post-translationally, proteolytic cleavage and release of the chaperone in the host cytosol stabilizes the folded protein.

Its subcellular location is the virion. Constitues the trimeric tip of the long tail fiber that mediates the attachment to the host receptor, together with the receptor-recognizing protein Gp38. In terms of biological role, the C-terminal chaperone protein mediates homotrimerization and proper folding of the catalytic trimer. The chain is Long tail fiber protein Gp37 (37) from Escherichia coli (Bacteriophage Ox2).